The chain runs to 472 residues: Glutamate--tRNA ligase (472 aa).

The 'HIGH' region motif lies at 7–17; that stretch reads PSPTGFLHVGG. 4 residues coordinate Zn(2+): Cys-96, Cys-98, Cys-123, and His-125. Positions 112–129 are enriched in basic and acidic residues; sequence ARKEKPRYDGRCRHRSEP. Residues 112–134 form a disordered region; the sequence is ARKEKPRYDGRCRHRSEPPSDQP. Positions 234-238 match the 'KMSKS' region motif; the sequence is KLSKR. Residue Lys-237 coordinates ATP.

Belongs to the class-I aminoacyl-tRNA synthetase family. Glutamate--tRNA ligase type 1 subfamily. In terms of assembly, monomer. Requires Zn(2+) as cofactor.

Its subcellular location is the cytoplasm. It carries out the reaction tRNA(Glu) + L-glutamate + ATP = L-glutamyl-tRNA(Glu) + AMP + diphosphate. Its function is as follows. Catalyzes the attachment of glutamate to tRNA(Glu) in a two-step reaction: glutamate is first activated by ATP to form Glu-AMP and then transferred to the acceptor end of tRNA(Glu). The polypeptide is Glutamate--tRNA ligase (Magnetococcus marinus (strain ATCC BAA-1437 / JCM 17883 / MC-1)).